A 325-amino-acid polypeptide reads, in one-letter code: Elongation factor P--(R)-beta-lysine ligase (325 aa).

76–78 (SPE) contributes to the substrate binding site. Residues 100 to 102 (RNE) and Asn109 contribute to the ATP site. Substrate is bound at residue Tyr118. Residue 244–245 (EL) participates in ATP binding. Glu251 provides a ligand contact to substrate. Gly300 contributes to the ATP binding site.

This sequence belongs to the class-II aminoacyl-tRNA synthetase family. EpmA subfamily. As to quaternary structure, homodimer.

The enzyme catalyses D-beta-lysine + L-lysyl-[protein] + ATP = N(6)-((3R)-3,6-diaminohexanoyl)-L-lysyl-[protein] + AMP + diphosphate + H(+). Its function is as follows. With EpmB is involved in the beta-lysylation step of the post-translational modification of translation elongation factor P (EF-P). Catalyzes the ATP-dependent activation of (R)-beta-lysine produced by EpmB, forming a lysyl-adenylate, from which the beta-lysyl moiety is then transferred to the epsilon-amino group of a conserved specific lysine residue in EF-P. This is Elongation factor P--(R)-beta-lysine ligase from Citrobacter koseri (strain ATCC BAA-895 / CDC 4225-83 / SGSC4696).